A 413-amino-acid chain; its full sequence is ATP phosphoribosyltransferase 2, chloroplastic (413 aa).

The transit peptide at Met1 to Val57 directs the protein to the chloroplast.

It belongs to the ATP phosphoribosyltransferase family. Long subfamily. Mg(2+) is required as a cofactor.

The protein localises to the plastid. It localises to the chloroplast. The catalysed reaction is 1-(5-phospho-beta-D-ribosyl)-ATP + diphosphate = 5-phospho-alpha-D-ribose 1-diphosphate + ATP. It participates in amino-acid biosynthesis; L-histidine biosynthesis; L-histidine from 5-phospho-alpha-D-ribose 1-diphosphate: step 1/9. Its activity is regulated as follows. Feedback inhibited by L-histidine. In terms of biological role, catalyzes the condensation of ATP and 5-phosphoribose 1-diphosphate to form N'-(5'-phosphoribosyl)-ATP (PR-ATP). The polypeptide is ATP phosphoribosyltransferase 2, chloroplastic (HISN1B) (Arabidopsis thaliana (Mouse-ear cress)).